The following is a 228-amino-acid chain: Cytidylate kinase (228 aa).

12–20 (GPSGSGKGT) is a binding site for ATP.

It belongs to the cytidylate kinase family. Type 1 subfamily.

It localises to the cytoplasm. The catalysed reaction is CMP + ATP = CDP + ADP. The enzyme catalyses dCMP + ATP = dCDP + ADP. This Pseudomonas entomophila (strain L48) protein is Cytidylate kinase.